The chain runs to 154 residues: Small ribosomal subunit protein bS6 (154 aa).

Positions 94–154 (VKQEGPLPTP…SSQGKESQKS (61 aa)) are disordered. Polar residues predominate over residues 103–112 (PRSSNKGYNQ). Basic and acidic residues predominate over residues 113–139 (SEKKDIESIDSTNKSEFKEEANDKKTA). Positions 140–154 (TSESTSSQGKESQKS) are enriched in polar residues.

It belongs to the bacterial ribosomal protein bS6 family.

In terms of biological role, binds together with bS18 to 16S ribosomal RNA. This Prochlorococcus marinus subsp. pastoris (strain CCMP1986 / NIES-2087 / MED4) protein is Small ribosomal subunit protein bS6.